Consider the following 585-residue polypeptide: NADP-reducing hydrogenase subunit HndD (585 aa).

The 84-residue stretch at 2 to 85 (SMLTITIDGK…NMVVKTNSLR (84 aa)) folds into the 2Fe-2S ferredoxin-type domain. Positions 36, 52, 55, and 69 each coordinate [2Fe-2S] cluster. The 40-residue stretch at 85 to 124 (RVLNARRTVLELLLSDHPKDCLVCAKSGECELQTLAERFG) folds into the 4Fe-4S His(Cys)3-ligated-type domain. Residues His101, Cys105, Cys108, and Cys114 each coordinate [4Fe-4S] cluster. 2 4Fe-4S ferredoxin-type domains span residues 144–174 (ASIIRDMDKCIMCRRCETMCNTVQTCGVLSG) and 185–216 (PAFEMNLADTVCTNCGQCVAVCPTGALVEHEY).

In terms of assembly, heterotetramer composed of HndA, HndB, HndC and HndD subunits. HndD is probably the hydrogenase subunit. [4Fe-4S] cluster serves as cofactor.

The enzyme catalyses H2 + NADP(+) = NADPH + H(+). Inhibited by oxygen. Catalyzes the reduction of NADP in the presence of molecular H(2) to yield NADPH. This is NADP-reducing hydrogenase subunit HndD (hndD) from Solidesulfovibrio fructosivorans (Desulfovibrio fructosivorans).